Here is a 394-residue protein sequence, read N- to C-terminus: Elongation factor Tu (394 aa).

The 195-residue stretch at 10–204 (KEHVNVGTIG…AVDTYIENPV (195 aa)) folds into the tr-type G domain. Positions 19-26 (GHVDHGKT) are G1. Residue 19-26 (GHVDHGKT) participates in GTP binding. A Mg(2+)-binding site is contributed by threonine 26. Residues 60 to 64 (GITIN) are G2. A G3 region spans residues 81–84 (DCPG). GTP is bound by residues 81 to 85 (DCPGH) and 136 to 139 (NKCD). The segment at 136–139 (NKCD) is G4. Residues 174 to 176 (SAL) are G5.

Belongs to the TRAFAC class translation factor GTPase superfamily. Classic translation factor GTPase family. EF-Tu/EF-1A subfamily. As to quaternary structure, monomer.

The protein resides in the cytoplasm. The catalysed reaction is GTP + H2O = GDP + phosphate + H(+). Its function is as follows. GTP hydrolase that promotes the GTP-dependent binding of aminoacyl-tRNA to the A-site of ribosomes during protein biosynthesis. This chain is Elongation factor Tu, found in Mycoplasmopsis synoviae (strain 53) (Mycoplasma synoviae).